Reading from the N-terminus, the 595-residue chain is Elongation factor 4 (595 aa).

The region spanning 2-184 is the tr-type G domain; that stretch reads ETIRNFSIIA…TITHNIPYPK (183 aa). GTP contacts are provided by residues 14-19 and 131-134; these read DHGKST and NKID.

The protein belongs to the TRAFAC class translation factor GTPase superfamily. Classic translation factor GTPase family. LepA subfamily.

The protein localises to the cell membrane. The enzyme catalyses GTP + H2O = GDP + phosphate + H(+). Required for accurate and efficient protein synthesis under certain stress conditions. May act as a fidelity factor of the translation reaction, by catalyzing a one-codon backward translocation of tRNAs on improperly translocated ribosomes. Back-translocation proceeds from a post-translocation (POST) complex to a pre-translocation (PRE) complex, thus giving elongation factor G a second chance to translocate the tRNAs correctly. Binds to ribosomes in a GTP-dependent manner. This chain is Elongation factor 4, found in Buchnera aphidicola subsp. Baizongia pistaciae (strain Bp).